The primary structure comprises 485 residues: L-ornithine N(5)-oxygenase (485 aa).

FAD-binding positions include 49-57 (ERQQQFVWH) and Gln-68. Position 73 (Lys-73) interacts with L-ornithine. Position 134 (Val-134) interacts with FAD. NADP(+) is bound at residue Arg-243. L-ornithine is bound by residues 257–260 (NEIF) and Asn-287. 287–289 (NYS) is a binding site for NADP(+). 425-427 (TLL) contacts FAD. Residue Ser-428 participates in L-ornithine binding.

The protein belongs to the lysine N(6)-hydroxylase/L-ornithine N(5)-oxygenase family. Homotetramer. FAD is required as a cofactor.

The enzyme catalyses L-ornithine + NADH + O2 = N(5)-hydroxy-L-ornithine + NAD(+) + H2O. It catalyses the reaction L-ornithine + NADPH + O2 = N(5)-hydroxy-L-ornithine + NADP(+) + H2O. The protein operates within siderophore biosynthesis. Functionally, L-ornithine N(5)-oxygenase; part of the gene cluster that mediates the biosynthesis of desferriferrichrome that chelates Fe(3+) to form ferrichrome. Fe(3+) is a key factor for induction of trap formation and the fungus uses the iron chelating desferriferrichrome to sequester Fe(3+) to inhibit trap formation and increase nematicidal activity. The biosynthesis of desferriferrichrome requires the action of the L-ornithine N(5)-oxygenase (LOO) Ao414 that hydroxylates L-ornithine at N(5), resulting in the formation of N(5)-hydroxyl-L-ornithine, which is subsequently N-acetylated to yield N(5)-acetyl-N(5)-hydroxy-L-ornithine (L-AHO). L-AHO harbors one hydroxamate moiety, which is the key core responsible for chelating iron. Then, L-AHO is further condensated with glycines to form desferriferrichrome through the NRPS protein Ao415. The protein is L-ornithine N(5)-oxygenase of Arthrobotrys oligospora (strain ATCC 24927 / CBS 115.81 / DSM 1491) (Nematode-trapping fungus).